Consider the following 852-residue polypeptide: Alanine--tRNA ligase (852 aa).

Zn(2+)-binding residues include histidine 554, histidine 558, cysteine 656, and histidine 660.

Belongs to the class-II aminoacyl-tRNA synthetase family. Requires Zn(2+) as cofactor.

The protein localises to the cytoplasm. The catalysed reaction is tRNA(Ala) + L-alanine + ATP = L-alanyl-tRNA(Ala) + AMP + diphosphate. Catalyzes the attachment of alanine to tRNA(Ala) in a two-step reaction: alanine is first activated by ATP to form Ala-AMP and then transferred to the acceptor end of tRNA(Ala). Also edits incorrectly charged Ser-tRNA(Ala) and Gly-tRNA(Ala) via its editing domain. The polypeptide is Alanine--tRNA ligase (Campylobacter concisus (strain 13826)).